Reading from the N-terminus, the 200-residue chain is dITP/XTP pyrophosphatase (200 aa).

19–24 (TSNAGK) serves as a coordination point for substrate. 2 residues coordinate Mg(2+): glutamate 49 and aspartate 78. Catalysis depends on aspartate 78, which acts as the Proton acceptor. Substrate contacts are provided by residues serine 79, 158–161 (FGYD), lysine 181, and 186–187 (HR).

The protein belongs to the HAM1 NTPase family. As to quaternary structure, homodimer. Requires Mg(2+) as cofactor.

It carries out the reaction XTP + H2O = XMP + diphosphate + H(+). The catalysed reaction is dITP + H2O = dIMP + diphosphate + H(+). The enzyme catalyses ITP + H2O = IMP + diphosphate + H(+). In terms of biological role, pyrophosphatase that catalyzes the hydrolysis of nucleoside triphosphates to their monophosphate derivatives, with a high preference for the non-canonical purine nucleotides XTP (xanthosine triphosphate), dITP (deoxyinosine triphosphate) and ITP. Seems to function as a house-cleaning enzyme that removes non-canonical purine nucleotides from the nucleotide pool, thus preventing their incorporation into DNA/RNA and avoiding chromosomal lesions. This Deinococcus radiodurans (strain ATCC 13939 / DSM 20539 / JCM 16871 / CCUG 27074 / LMG 4051 / NBRC 15346 / NCIMB 9279 / VKM B-1422 / R1) protein is dITP/XTP pyrophosphatase.